The following is a 485-amino-acid chain: MAEEAILGFLQNNEQITDSGQFSAEFNIDHNELVNVIKSLHGFRYIDVQDIKKETWILTDEGKKYAAEGSPEVQLFLAVPEEGSISKDELQKKLAPAVFKIGCSQAGKNKWVEMGKQVSRKVKDVEDKVKGQLLQIQQGKEFDKESINSLKARKLIVPQIWKGYSVKKGPNYAPERKKVATDLTRENLQNWKELEFKEYNFKAKGAPVDAGHLHALLKVRKQFKDIFVQMGFEEMPTNNYVESSFWNFDALFQPQQHPARDSHDTFFLKVPSTTRTLPEDYVERVKRVHESGGYGSRGYNYDWKREEANKNLLRTHTTAVSSRMLYALAQKPFVPKKYFSIDRVFRNEAVDRTHLAEFHQIEGLICDRGLTLGDLIGVLEDFFSRLGMSKLRFKPAYNPYTEPSMEIFSYHEGLGKWVEIGNSGMFRPEMLLPMGLPEDVRVIAWGLSLERPTMILYGIDNIRDLFGHKVDLDLIKRNPICRIGI.

L-phenylalanine is bound by residues Thr318, 360–362 (QIE), and Tyr400. Position 402 (Glu402) interacts with Mg(2+). Phe426 serves as a coordination point for L-phenylalanine.

Belongs to the class-II aminoacyl-tRNA synthetase family. Phe-tRNA synthetase alpha subunit type 2 subfamily. As to quaternary structure, tetramer of two alpha and two beta subunits. Requires Mg(2+) as cofactor.

The protein localises to the cytoplasm. The protein resides in the cytosol. It carries out the reaction tRNA(Phe) + L-phenylalanine + ATP = L-phenylalanyl-tRNA(Phe) + AMP + diphosphate + H(+). This is Phenylalanine--tRNA ligase alpha subunit, cytoplasmic from Arabidopsis thaliana (Mouse-ear cress).